A 570-amino-acid polypeptide reads, in one-letter code: Frizzled-2 (570 aa).

Positions 1–28 (MRARSALPRSALPRLLLPLLLLPAAGPA) are cleaved as a signal peptide. The Extracellular portion of the chain corresponds to 29 to 252 (QFHGEKGISI…QEETRFARLW (224 aa)). Positions 39 to 158 (PDHGFCQPIS…HGAEQICVGQ (120 aa)) constitute an FZ domain. 5 disulfides stabilise this stretch: cysteine 44/cysteine 105, cysteine 52/cysteine 98, cysteine 89/cysteine 126, cysteine 115/cysteine 155, and cysteine 119/cysteine 143. An N-linked (GlcNAc...) asparagine glycan is attached at asparagine 58. Asparagine 159 carries N-linked (GlcNAc...) asparagine glycosylation. A disordered region spans residues 166–194 (PALLTTAPPSGLQPGAGGTPGGPGGGGSP). A compositionally biased stretch (gly residues) spans 179–193 (PGAGGTPGGPGGGGS). A helical transmembrane segment spans residues 253-273 (ILTWSVLCCASTFFTVTTYLV). Residues 274–284 (DMQRFRYPERP) lie on the Cytoplasmic side of the membrane. The helical transmembrane segment at 285-305 (IIFLSGCYTMVSVAYIAGFVL) threads the bilayer. The Extracellular portion of the chain corresponds to 306 to 332 (QERVVCNERFSEDGYRTVVQGTKKEGC). Residues 333 to 353 (TILFMMLYFFSMASSIWWVIL) form a helical membrane-spanning segment. Topologically, residues 354-375 (SLTWFLAAGMKWGHEAIEANSQ) are cytoplasmic. A helical transmembrane segment spans residues 376–396 (YFHLAAWAVPAVKTITILAMG). Residues 397 to 419 (QIDGDLLSGVCFVGLNSLDPLRG) lie on the Extracellular side of the membrane. The chain crosses the membrane as a helical span at residues 420–440 (FVLAPLFVYLFIGTSFLLAGF). The Cytoplasmic segment spans residues 441 to 466 (VSLFRIRTIMKHDGTKTEKLERLMVR). The chain crosses the membrane as a helical span at residues 467–487 (IGVFSVLYTVPATIVIACYFY). Residues 488–524 (EQAFREHWERSWVSQHCKSLAIPCPAHYTPRMSPDFT) are Extracellular-facing. A helical membrane pass occupies residues 525-545 (VYMIKYLMTLIVGITSGFWIW). The Cytoplasmic segment spans residues 546–570 (SGKTLHSWRKFYTRLTNSRHGETTV). Positions 548-553 (KTLHSW) match the Lys-Thr-X-X-X-Trp motif, mediates interaction with the PDZ domain of Dvl family members motif. The PDZ-binding motif lies at 568–570 (TTV).

It belongs to the G-protein coupled receptor Fz/Smo family. Ubiquitinated by ZNRF3, leading to its degradation by the proteasome. In terms of tissue distribution, expressed in embryonic and adult heart, lung, chondrocytes and brain. Also expressed in the developing gastrointestinal tract (strongest in foregut), much weaker expression in the adult. No expression in fetal liver and adult spleen. Up-regulated in esophageal squamous cell carcinomas.

The protein resides in the membrane. It is found in the cell membrane. Receptor for Wnt proteins. Most of frizzled receptors are coupled to the beta-catenin canonical signaling pathway, which leads to the activation of disheveled proteins, inhibition of GSK-3 kinase, nuclear accumulation of beta-catenin and activation of Wnt target genes. A second signaling pathway involving PKC and calcium fluxes has been seen for some family members, but it is not yet clear if it represents a distinct pathway or if it can be integrated in the canonical pathway, as PKC seems to be required for Wnt-mediated inactivation of GSK-3 kinase. Both pathways seem to involve interactions with G-proteins. May be involved in transduction and intercellular transmission of polarity information during tissue morphogenesis and/or in differentiated tissues. The polypeptide is Frizzled-2 (Fzd2) (Mus musculus (Mouse)).